Consider the following 565-residue polypeptide: NAD-dependent malic enzyme (565 aa).

Y104 functions as the Proton donor in the catalytic mechanism. Residue R157 participates in NAD(+) binding. The active-site Proton acceptor is K175. The a divalent metal cation site is built by E246, D247, and D270. Residues D270 and N418 each coordinate NAD(+).

It belongs to the malic enzymes family. In terms of assembly, homotetramer. Mg(2+) is required as a cofactor. It depends on Mn(2+) as a cofactor.

The catalysed reaction is (S)-malate + NAD(+) = pyruvate + CO2 + NADH. It carries out the reaction oxaloacetate + H(+) = pyruvate + CO2. The protein is NAD-dependent malic enzyme of Salmonella newport (strain SL254).